Consider the following 504-residue polypeptide: Amyloid-beta A4 precursor protein-binding family B member 3 (504 aa).

The WW domain maps to 29 to 61 (TGLPPGWRKIRDAAGTYYWHVPSGSTQWQRPTW). PID domains are found at residues 111-278 (EPGA…QVEL) and 283-438 (SQAA…RTSS).

Interacts with APP (via intracellular domain). Interacts with APLP1 and APLP2 (via intracellular domain). As to expression, expressed predominantly in brain and testis.

The protein localises to the cytoplasm. It localises to the nucleus. Functionally, may modulate the internalization of amyloid-beta precursor protein. This Rattus norvegicus (Rat) protein is Amyloid-beta A4 precursor protein-binding family B member 3.